A 354-amino-acid polypeptide reads, in one-letter code: Lariat debranching enzyme (354 aa).

A divalent metal cation is bound by residues cysteine 14, histidine 16, and aspartate 45. Residues lysine 59, asparagine 90, histidine 91, lysine 134, and histidine 156 each contribute to the RNA site. Residue asparagine 90 participates in a divalent metal cation binding. Residues serine 130–arginine 158 form a lariat recognition loop region. Histidine 180 lines the a divalent metal cation pocket. RNA is bound by residues glycine 201, aspartate 205, histidine 230, methionine 231, and histidine 232. Position 230 (histidine 230) interacts with a divalent metal cation. A divalent metal cation is bound at residue histidine 232.

It belongs to the lariat debranching enzyme family. Requires Fe(2+) as cofactor. It depends on Zn(2+) as a cofactor. The cofactor is Mn(2+).

It is found in the cytoplasm. Its subcellular location is the perinuclear region. Its activity is regulated as follows. Active in presence of diverse metals including Fe(2+), Zn(2+) and Mn(2+). Binds two metal cations in two adjacent alpha and beta metal-binding pockets. The activity is the highest with Fe(2+) bound to the 2 metal-binding sites. The activity is slightly lower with Fe(2+) bound to the beta site and Zn(2+) to the alpha site and decreases further when only Zn(2+) is bound. No activity with Mn(2+). However, another study showed activity with Mn(2+) bound to the beta site and Zn(2+) to the alpha site. Mn(2+) appears unable to bind to the alpha site. Functionally, cleaves the 2'-5' phosphodiester linkage at the branch point of excised lariat intron RNA and converts them into linear molecules that can be subsequently degraded, thereby facilitating ribonucleotide turnover. This chain is Lariat debranching enzyme, found in Entamoeba histolytica (strain ATCC 30459 / HM-1:IMSS / ABRM).